A 194-amino-acid polypeptide reads, in one-letter code: Imidazoleglycerol-phosphate dehydratase (194 aa).

The protein belongs to the imidazoleglycerol-phosphate dehydratase family.

It localises to the cytoplasm. It catalyses the reaction D-erythro-1-(imidazol-4-yl)glycerol 3-phosphate = 3-(imidazol-4-yl)-2-oxopropyl phosphate + H2O. It functions in the pathway amino-acid biosynthesis; L-histidine biosynthesis; L-histidine from 5-phospho-alpha-D-ribose 1-diphosphate: step 6/9. The chain is Imidazoleglycerol-phosphate dehydratase from Listeria monocytogenes serotype 4b (strain F2365).